Here is a 759-residue protein sequence, read N- to C-terminus: uncharacterized protein (759 aa).

This is an uncharacterized protein from Escherichia coli (strain K12).